The following is a 440-amino-acid chain: ATP-dependent protease ATPase subunit HslU (440 aa).

ATP-binding positions include valine 18, 60–65 (GVGKTE), aspartate 254, glutamate 319, and arginine 391.

This sequence belongs to the ClpX chaperone family. HslU subfamily. As to quaternary structure, a double ring-shaped homohexamer of HslV is capped on each side by a ring-shaped HslU homohexamer. The assembly of the HslU/HslV complex is dependent on binding of ATP.

It is found in the cytoplasm. ATPase subunit of a proteasome-like degradation complex; this subunit has chaperone activity. The binding of ATP and its subsequent hydrolysis by HslU are essential for unfolding of protein substrates subsequently hydrolyzed by HslV. HslU recognizes the N-terminal part of its protein substrates and unfolds these before they are guided to HslV for hydrolysis. This chain is ATP-dependent protease ATPase subunit HslU, found in Cellvibrio japonicus (strain Ueda107) (Pseudomonas fluorescens subsp. cellulosa).